The primary structure comprises 245 residues: Phycocyanobilin:ferredoxin oxidoreductase (245 aa).

Belongs to the HY2 family.

It carries out the reaction (2R,3Z)-phycocyanobilin + 4 oxidized [2Fe-2S]-[ferredoxin] = biliverdin IXalpha + 4 reduced [2Fe-2S]-[ferredoxin] + 4 H(+). Catalyzes the four-electron reduction of biliverdin IX-alpha (2-electron reduction at both the A and D rings); the reaction proceeds via an isolatable 2-electron intermediate, 181,182-dihydrobiliverdin. This is Phycocyanobilin:ferredoxin oxidoreductase from Trichodesmium erythraeum (strain IMS101).